Here is a 342-residue protein sequence, read N- to C-terminus: MASATRAVFGELPSGGGTVEKFQLQSDLLRVDIISWGCTITALEVKDRQGRSSDVVLGFAELEGYLQKQPYFGAVIGRVANRIAKGTFKVDGKEYHLAINKEPNSLHGGVRGFDKVLWTPRVLSNGIQFSRISPDGEEGYPGELKVWVTYTLDGGELVVNYRAQASQATPVNLTNHSYFNLAGQGSPNIYDHEVTIEADTYLPVDETLIPTGEVAPVQGTAFDLRKPVELGKHLQDFHLNGFDHNFCLKGSKEKHFCARVHHAASGRVLEVYTTQPGVQFYMGNFLDGTLKGKNGAVYPKHSGFCLETQNWPDAVNQPRFPPVLLRPGEEYDHTTWFKFSVA.

Position 2 is an N-acetylalanine (A2). S14 bears the Phosphoserine mark. Residues 81-82 (NR) and H107 contribute to the beta-D-galactose site. S124 is subject to Phosphoserine. H176 (proton donor) is an active-site residue. Beta-D-galactose-binding positions include 176–178 (HSY), D243, Q279, and E307. The active-site Proton acceptor is the E307.

It belongs to the aldose epimerase family. In terms of assembly, monomer.

The protein localises to the cytoplasm. The enzyme catalyses alpha-D-galactose = beta-D-galactose. The catalysed reaction is alpha-D-glucose = beta-D-glucose. It participates in carbohydrate metabolism; hexose metabolism. Its pathway is carbohydrate metabolism; galactose metabolism. In terms of biological role, mutarotase that catalyzes the interconversion of beta-D-galactose and alpha-D-galactose during galactose metabolism. Beta-D-galactose is metabolized in the liver into glucose 1-phosphate, the primary metabolic fuel, by the action of four enzymes that constitute the Leloir pathway: GALM, GALK1 (galactokinase), GALT (galactose-1-phosphate uridylyltransferase) and GALE (UDP-galactose-4'-epimerase). Involved in the maintenance of the equilibrium between the beta- and alpha-anomers of galactose, therefore ensuring a sufficient supply of the alpha-anomer for GALK1. Also active on D-glucose although shows a preference for galactose over glucose. In Pongo abelii (Sumatran orangutan), this protein is Galactose mutarotase (GALM).